A 567-amino-acid polypeptide reads, in one-letter code: Proline--tRNA ligase (567 aa).

Belongs to the class-II aminoacyl-tRNA synthetase family. ProS type 1 subfamily. In terms of assembly, homodimer.

Its subcellular location is the cytoplasm. It catalyses the reaction tRNA(Pro) + L-proline + ATP = L-prolyl-tRNA(Pro) + AMP + diphosphate. Functionally, catalyzes the attachment of proline to tRNA(Pro) in a two-step reaction: proline is first activated by ATP to form Pro-AMP and then transferred to the acceptor end of tRNA(Pro). As ProRS can inadvertently accommodate and process non-cognate amino acids such as alanine and cysteine, to avoid such errors it has two additional distinct editing activities against alanine. One activity is designated as 'pretransfer' editing and involves the tRNA(Pro)-independent hydrolysis of activated Ala-AMP. The other activity is designated 'posttransfer' editing and involves deacylation of mischarged Ala-tRNA(Pro). The misacylated Cys-tRNA(Pro) is not edited by ProRS. In Staphylococcus aureus (strain MRSA252), this protein is Proline--tRNA ligase.